The primary structure comprises 232 residues: Noggin (232 aa).

A signal peptide spans 1–27 (MERCPSLGVTLYALVVVLGLRAAPAGG). Asparagine 62 carries an N-linked (GlcNAc...) asparagine glycan. The tract at residues 77–99 (GFMATSPPEDRPGGGGGPAGGAE) is disordered. 4 disulfide bridges follow: cysteine 155–cysteine 192, cysteine 178–cysteine 228, cysteine 184–cysteine 230, and cysteine 207–cysteine 215.

This sequence belongs to the noggin family. In terms of assembly, homodimer. Interacts with GDF5; inhibits chondrocyte differentiation. As to expression, expressed in condensing cartilage and immature chondrocytes.

Its subcellular location is the secreted. In terms of biological role, essential for cartilage morphogenesis and joint formation. Inhibitor of bone morphogenetic proteins (BMP) signaling which is required for growth and patterning of the neural tube and somite. Inhibits chondrocyte differentiation through its interaction with GDF5 and, probably, GDF6. This chain is Noggin (Nog), found in Mus musculus (Mouse).